The chain runs to 406 residues: MAAAAARPLVTIQTLDGDMSTDQSSTVVLPDVMTAPVRPDIVNFVHAQISNNSRQPYAVSKKAGHQTSAESWGTGRAVSRIPRVPGGGTHRAGQAAFGNMCRGGRMFAPTKIWRRWHRRVNVNMKRHAIVSAIAATAVPALVMARGHKIENVPEMPLVVSDSAEAVEKTSAAIKVLKQIGAYDDAEKAKNSIGIRPGKGKMRNRRYISRKGPLVVYGTEGSKIVKAFRNLPGVELCHVERLNLLKLAPGGHLGRFVIWTKSAFEKLESIYGSFEKPSEKKKGYVLPRAKMVNADLARIINSDEIQSVVNPIKKDAKRAVLKKNPLKNLNVMLKLNPYAKTAKRMSLLAEAQRVKAKKEKLAKKRKTVTKEEALAIKAAGKSWYKTMISDSDYTEFDNFTKWLGASQ.

The tract at residues 56-95 (PYAVSKKAGHQTSAESWGTGRAVSRIPRVPGGGTHRAGQA) is disordered.

Belongs to the universal ribosomal protein uL4 family.

This is Large ribosomal subunit protein uL4z (RPL4A) from Arabidopsis thaliana (Mouse-ear cress).